Consider the following 320-residue polypeptide: MAAAALQLRQSLCPGPRVLRTFSSVASPAAPRAGPRTASRSERPMRRKALPPRTEKMDTDQDWPSVYPTAAPFKPSAVPLPVRMGYPVKKGVPMAKEGNLELLKIPNFLHLTPVAIKRHCAALKDFCTEWPAALDSDEKCEEHFPVEIDTADYVSSGPSIRNPKARAVTLRVKLSSLNLDNHAKKKLIKLVGERYCKATDVLTITTDRCPLKRQNYDYAVYLLTVLYHESWKTEDWENSKTEEDMDEYVWAKSSSENSVLQTLLQMRAAESSVAPSREELLGTKEVEDYQKCVVRLKNEGENEASLAQYKESVKRLLNLA.

A disordered region spans residues 24–63 (SVASPAAPRAGPRTASRSERPMRRKALPPRTEKMDTDQDW).

Belongs to the mitochondrion-specific ribosomal protein mS35 family. In terms of assembly, component of the mitochondrial ribosome small subunit (28S) which comprises a 12S rRNA and about 30 distinct proteins.

The protein resides in the mitochondrion. The protein is Small ribosomal subunit protein mS35 of Mus musculus (Mouse).